The primary structure comprises 210 residues: Probable membrane protein Rv1733c (210 aa).

2 helical membrane passes run 43–63 (AVVM…AAAA) and 165–185 (ALAA…LLAL).

It localises to the cell membrane. The sequence is that of Probable membrane protein Rv1733c from Mycobacterium tuberculosis (strain ATCC 25618 / H37Rv).